We begin with the raw amino-acid sequence, 249 residues long: DNA polymerase sliding clamp (249 aa).

This sequence belongs to the PCNA family. Homotrimer. The subunits circularize to form a toroid; DNA passes through its center. Replication factor C (RFC) is required to load the toroid on the DNA.

In terms of biological role, sliding clamp subunit that acts as a moving platform for DNA processing. Responsible for tethering the catalytic subunit of DNA polymerase and other proteins to DNA during high-speed replication. The polypeptide is DNA polymerase sliding clamp (Thermococcus gammatolerans (strain DSM 15229 / JCM 11827 / EJ3)).